Here is a 171-residue protein sequence, read N- to C-terminus: uncharacterized protein (171 aa).

The first 20 residues, 1–20 (MRRVLFSCFCGLLWSSSGWA), serve as a signal peptide directing secretion. C40 and C80 are joined by a disulfide.

Belongs to the fimbrial protein family.

It localises to the fimbrium. Functionally, part of the sfmACDHF fimbrial operon. Could contribute to adhesion to various surfaces in specific environmental niches. Increases adhesion to eukaryotic T24 bladder epithelial cells in the absence of fim genes. This is an uncharacterized protein from Escherichia coli (strain K12).